The chain runs to 155 residues: MIEKKTVCQIVEEWLEGKDYFLVEVTVSPDDKIVVEIDHAEGVWIEDCVELSRFIESKLNREEEDYELEVGSAGIGQPFKVLQQYYIHIGQEVEVVTRDGRKLAGILKDADEEKFTVGVQKKVKLEGSKRPKLIEEDETFTYEQIKYTKYLISFK.

It belongs to the RimP family.

The protein resides in the cytoplasm. Functionally, required for maturation of 30S ribosomal subunits. This is Ribosome maturation factor RimP from Bacteroides thetaiotaomicron (strain ATCC 29148 / DSM 2079 / JCM 5827 / CCUG 10774 / NCTC 10582 / VPI-5482 / E50).